Consider the following 852-residue polypeptide: Carbohydrate-responsive element-binding protein (852 aa).

Residues 1-12 (MAGALAGLAAGL) are compositionally biased toward low complexity. Disordered stretches follow at residues 1 to 36 (MAGA…SLRR) and 54 to 80 (VSSP…FGPR). 3 positions are modified to phosphoserine: Ser20, Ser23, and Ser25. Thr27 is subject to Phosphothreonine. A Phosphoserine modification is found at Ser29. A Phosphoserine modification is found at Ser196. Disordered regions lie at residues 328–365 (DSLF…CPGP), 486–527 (PCFS…NNPC), and 548–648 (STLL…NKTE). A compositionally biased stretch (low complexity) spans 505-521 (ASPPTLAPATASPPTTA). Polar residues predominate over residues 548 to 559 (STLLRSPGSPQE). Ser556 bears the Phosphoserine; by AMPK mark. Over residues 568–584 (FLPPTPAPTPPRPPPGP) the composition is skewed to pro residues. A phosphoserine mark is found at Ser602, Ser614, and Ser631. Positions 649–703 (NRRITHISAEQKRRFNIKLGFDTLHGLVSTLSAQPSLKVSKATTLQKTAEYILML) constitute a bHLH domain. A leucine-zipper region spans residues 703-724 (LQQERAGLQEEAQQLRDEIEEL).

As to quaternary structure, binds DNA as a heterodimer with MLX/TCFL4. Phosphorylation at Ser-556 by AMPK inactivates the DNA-binding activity. In terms of tissue distribution, expressed in liver, heart, kidney, cerebellum and intestinal tissues.

Its subcellular location is the nucleus. In terms of biological role, binds DNA as a heterodimer with MLX/TCFL4 and activates transcription. Binds to the canonical E box sequence 5'-CACGTG-3'. Plays a role in transcriptional activation of glycolytic target genes. Involved in glucose-responsive gene regulation. Regulates transcription in response to changes in cellular carbohydrate abundance such as occurs during fasting to feeding metabolic transition. Refeeding stimulates MLXIPL/ChREBP transcription factor, leading to increased BCKDK to PPM1K expression ratio, phosphorylation and activation of ACLY that ultimately results in the generation of malonyl-CoA and oxaloacetate immediate substrates of de novo lipogenesis and gluconeogenesis, respectively. In Homo sapiens (Human), this protein is Carbohydrate-responsive element-binding protein (MLXIPL).